A 190-amino-acid polypeptide reads, in one-letter code: Potassium-transporting ATPase KdpC subunit (190 aa).

A helical membrane pass occupies residues 13–33 (VGFLLLTLVCGVVYPGIVTII).

It belongs to the KdpC family. In terms of assembly, the system is composed of three essential subunits: KdpA, KdpB and KdpC.

Its subcellular location is the cell membrane. Its function is as follows. Part of the high-affinity ATP-driven potassium transport (or Kdp) system, which catalyzes the hydrolysis of ATP coupled with the electrogenic transport of potassium into the cytoplasm. This subunit acts as a catalytic chaperone that increases the ATP-binding affinity of the ATP-hydrolyzing subunit KdpB by the formation of a transient KdpB/KdpC/ATP ternary complex. This is Potassium-transporting ATPase KdpC subunit from Listeria welshimeri serovar 6b (strain ATCC 35897 / DSM 20650 / CCUG 15529 / CIP 8149 / NCTC 11857 / SLCC 5334 / V8).